The primary structure comprises 267 residues: PF03932 family protein CutC (267 aa).

This sequence belongs to the CutC family.

The protein resides in the cytoplasm. The protein is PF03932 family protein CutC of Xylella fastidiosa (strain Temecula1 / ATCC 700964).